The chain runs to 89 residues: Small ribosomal subunit protein uS15 (89 aa).

Belongs to the universal ribosomal protein uS15 family. Part of the 30S ribosomal subunit. Forms a bridge to the 50S subunit in the 70S ribosome, contacting the 23S rRNA.

Functionally, one of the primary rRNA binding proteins, it binds directly to 16S rRNA where it helps nucleate assembly of the platform of the 30S subunit by binding and bridging several RNA helices of the 16S rRNA. Forms an intersubunit bridge (bridge B4) with the 23S rRNA of the 50S subunit in the ribosome. This chain is Small ribosomal subunit protein uS15, found in Cupriavidus necator (strain ATCC 17699 / DSM 428 / KCTC 22496 / NCIMB 10442 / H16 / Stanier 337) (Ralstonia eutropha).